A 206-amino-acid polypeptide reads, in one-letter code: Thymidylate kinase (206 aa).

ATP is bound at residue 7 to 14; it reads GGEGVGKT.

Belongs to the thymidylate kinase family.

The catalysed reaction is dTMP + ATP = dTDP + ADP. Its function is as follows. Phosphorylation of dTMP to form dTDP in both de novo and salvage pathways of dTTP synthesis. This Synechococcus sp. (strain JA-2-3B'a(2-13)) (Cyanobacteria bacterium Yellowstone B-Prime) protein is Thymidylate kinase.